The chain runs to 126 residues: Fluoride-specific ion channel FluC (126 aa).

4 helical membrane-spanning segments follow: residues P4–L24, I33–A53, F67–V87, and M97–L117. Na(+) is bound by residues G74 and T77.

Belongs to the fluoride channel Fluc/FEX (TC 1.A.43) family.

Its subcellular location is the cell inner membrane. It catalyses the reaction fluoride(in) = fluoride(out). Na(+) is not transported, but it plays an essential structural role and its presence is essential for fluoride channel function. In terms of biological role, fluoride-specific ion channel. Important for reducing fluoride concentration in the cell, thus reducing its toxicity. The chain is Fluoride-specific ion channel FluC from Acinetobacter baumannii (strain SDF).